Here is a 516-residue protein sequence, read N- to C-terminus: Cytochrome P450 1A2 (516 aa).

O-linked (GlcNAc) serine glycosylation occurs at Ser-69. A substrate-binding site is contributed by Phe-226. Cys-458 serves as a coordination point for heme.

It belongs to the cytochrome P450 family. Interacts with PGRMC1; the interaction requires PGRMC1 homodimerization. It depends on heme as a cofactor.

The protein resides in the endoplasmic reticulum membrane. The protein localises to the microsome membrane. It carries out the reaction an organic molecule + reduced [NADPH--hemoprotein reductase] + O2 = an alcohol + oxidized [NADPH--hemoprotein reductase] + H2O + H(+). The catalysed reaction is 17beta-estradiol + reduced [NADPH--hemoprotein reductase] + O2 = 2-hydroxy-17beta-estradiol + oxidized [NADPH--hemoprotein reductase] + H2O + H(+). It catalyses the reaction 17beta-estradiol + reduced [NADPH--hemoprotein reductase] + O2 = 4-hydroxy-17beta-estradiol + oxidized [NADPH--hemoprotein reductase] + H2O + H(+). The enzyme catalyses estrone + reduced [NADPH--hemoprotein reductase] + O2 = 2-hydroxyestrone + oxidized [NADPH--hemoprotein reductase] + H2O + H(+). It carries out the reaction estrone + reduced [NADPH--hemoprotein reductase] + O2 = 4-hydroxyestrone + oxidized [NADPH--hemoprotein reductase] + H2O + H(+). The catalysed reaction is cholesterol + reduced [NADPH--hemoprotein reductase] + O2 = 25-hydroxycholesterol + oxidized [NADPH--hemoprotein reductase] + H2O + H(+). It catalyses the reaction all-trans-retinol + reduced [NADPH--hemoprotein reductase] + O2 = all-trans-retinal + oxidized [NADPH--hemoprotein reductase] + 2 H2O + H(+). The enzyme catalyses all-trans-retinal + reduced [NADPH--hemoprotein reductase] + O2 = all-trans-retinoate + oxidized [NADPH--hemoprotein reductase] + H2O + 2 H(+). It carries out the reaction (5Z,8Z,11Z,14Z)-eicosatetraenoate + reduced [NADPH--hemoprotein reductase] + O2 = (14R,15S)-epoxy-(5Z,8Z,11Z)-eicosatrienoate + oxidized [NADPH--hemoprotein reductase] + H2O + H(+). The catalysed reaction is (5Z,8Z,11Z,14Z)-eicosatetraenoate + reduced [NADPH--hemoprotein reductase] + O2 = (14S,15R)-epoxy-(5Z,8Z,11Z)-eicosatrienoate + oxidized [NADPH--hemoprotein reductase] + H2O + H(+). It catalyses the reaction (5Z,8Z,11Z,14Z,17Z)-eicosapentaenoate + reduced [NADPH--hemoprotein reductase] + O2 = (17R,18S)-epoxy-(5Z,8Z,11Z,14Z)-eicosatetraenoate + oxidized [NADPH--hemoprotein reductase] + H2O + H(+). The enzyme catalyses (4Z,7Z,10Z,13Z,16Z,19Z)-docosahexaenoate + reduced [NADPH--hemoprotein reductase] + O2 = (19R,20S)-epoxy-(4Z,7Z,10Z,13Z,16Z)-docosapentaenoate + oxidized [NADPH--hemoprotein reductase] + H2O + H(+). It carries out the reaction (5S)-hydroperoxy-(6E,8Z,11Z,14Z)-eicosatetraenoate = 5-oxo-(6E,8Z,11Z,14Z)-eicosatetraenoate + H2O. The catalysed reaction is (12S)-hydroperoxy-(5Z,8Z,10E,14Z)-eicosatetraenoate = 12-oxo-(5Z,8Z,10E,14Z)-eicosatetraenoate + H2O. It catalyses the reaction (15S)-hydroperoxy-(5Z,8Z,11Z,13E)-eicosatetraenoate = 15-oxo-(5Z,8Z,11Z,13E)-eicosatetraenoate + H2O. The enzyme catalyses (13S)-hydroperoxy-(9Z,11E)-octadecadienoate = 13-oxo-(9Z,11E)-octadecadienoate + H2O. It carries out the reaction (5Z,8Z,11Z,14Z)-eicosatetraenoate + reduced [NADPH--hemoprotein reductase] + O2 = 13-hydroxy-(5Z,8Z,11Z,14Z)-eicosatetraenoate + oxidized [NADPH--hemoprotein reductase] + H2O + H(+). The catalysed reaction is (5Z,8Z,11Z,14Z)-eicosatetraenoate + reduced [NADPH--hemoprotein reductase] + O2 = 19-hydroxy-(5Z,8Z,11Z,14Z)-eicosatetraenoate + oxidized [NADPH--hemoprotein reductase] + H2O + H(+). It catalyses the reaction (9Z,12Z)-octadecadienoate + reduced [NADPH--hemoprotein reductase] + O2 = 11-hydroxy-(9Z,12Z)-octadecadienoate + oxidized [NADPH--hemoprotein reductase] + H2O + H(+). It participates in cofactor metabolism; retinol metabolism. Its pathway is steroid metabolism; cholesterol metabolism. It functions in the pathway lipid metabolism; arachidonate metabolism. In terms of biological role, a cytochrome P450 monooxygenase involved in the metabolism of various endogenous substrates, including fatty acids, steroid hormones and vitamins. Mechanistically, uses molecular oxygen inserting one oxygen atom into a substrate, and reducing the second into a water molecule, with two electrons provided by NADPH via cytochrome P450 reductase (NADPH--hemoprotein reductase). Catalyzes the hydroxylation of carbon-hydrogen bonds. Exhibits high catalytic activity for the formation of hydroxyestrogens from estrone (E1) and 17beta-estradiol (E2), namely 2-hydroxy E1 and E2. Metabolizes cholesterol toward 25-hydroxycholesterol, a physiological regulator of cellular cholesterol homeostasis. May act as a major enzyme for all-trans retinoic acid biosynthesis in the liver. Catalyzes two successive oxidative transformation of all-trans retinol to all-trans retinal and then to the active form all-trans retinoic acid. Primarily catalyzes stereoselective epoxidation of the last double bond of polyunsaturated fatty acids (PUFA), displaying a strong preference for the (R,S) stereoisomer. Catalyzes bisallylic hydroxylation and omega-1 hydroxylation of PUFA. May also participate in eicosanoids metabolism by converting hydroperoxide species into oxo metabolites (lipoxygenase-like reaction, NADPH-independent). Plays a role in the oxidative metabolism of xenobiotics. Catalyzes the N-hydroxylation of heterocyclic amines and the O-deethylation of phenacetin. Metabolizes caffeine via N3-demethylation. The sequence is that of Cytochrome P450 1A2 (CYP1A2) from Pongo abelii (Sumatran orangutan).